The primary structure comprises 251 residues: 3-deoxy-manno-octulosonate cytidylyltransferase (251 aa).

The protein belongs to the KdsB family.

The protein localises to the cytoplasm. It catalyses the reaction 3-deoxy-alpha-D-manno-oct-2-ulosonate + CTP = CMP-3-deoxy-beta-D-manno-octulosonate + diphosphate. It participates in nucleotide-sugar biosynthesis; CMP-3-deoxy-D-manno-octulosonate biosynthesis; CMP-3-deoxy-D-manno-octulosonate from 3-deoxy-D-manno-octulosonate and CTP: step 1/1. The protein operates within bacterial outer membrane biogenesis; lipopolysaccharide biosynthesis. In terms of biological role, activates KDO (a required 8-carbon sugar) for incorporation into bacterial lipopolysaccharide in Gram-negative bacteria. In Vibrio parahaemolyticus serotype O3:K6 (strain RIMD 2210633), this protein is 3-deoxy-manno-octulosonate cytidylyltransferase.